The sequence spans 584 residues: 2-succinyl-5-enolpyruvyl-6-hydroxy-3-cyclohexene-1-carboxylate synthase (584 aa).

A disordered region spans residues 563–584 (TDAEASHRERERLADRVTGLSV). The span at 566 to 577 (EASHRERERLAD) shows a compositional bias: basic and acidic residues.

The protein belongs to the TPP enzyme family. MenD subfamily. As to quaternary structure, homodimer. The cofactor is Mg(2+). Requires Mn(2+) as cofactor. It depends on thiamine diphosphate as a cofactor.

The enzyme catalyses isochorismate + 2-oxoglutarate + H(+) = 5-enolpyruvoyl-6-hydroxy-2-succinyl-cyclohex-3-ene-1-carboxylate + CO2. It participates in quinol/quinone metabolism; 1,4-dihydroxy-2-naphthoate biosynthesis; 1,4-dihydroxy-2-naphthoate from chorismate: step 2/7. Its pathway is quinol/quinone metabolism; menaquinone biosynthesis. Functionally, catalyzes the thiamine diphosphate-dependent decarboxylation of 2-oxoglutarate and the subsequent addition of the resulting succinic semialdehyde-thiamine pyrophosphate anion to isochorismate to yield 2-succinyl-5-enolpyruvyl-6-hydroxy-3-cyclohexene-1-carboxylate (SEPHCHC). The chain is 2-succinyl-5-enolpyruvyl-6-hydroxy-3-cyclohexene-1-carboxylate synthase from Halobacterium salinarum (strain ATCC 29341 / DSM 671 / R1).